The following is a 264-amino-acid chain: Phosphate import ATP-binding protein PstB (264 aa).

The ABC transporter domain occupies 11-250 (LKAEALSVYY…DTTEKIFDSP (240 aa)). 43 to 50 (GPSGCGKS) is an ATP binding site.

The protein belongs to the ABC transporter superfamily. Phosphate importer (TC 3.A.1.7) family. The complex is composed of two ATP-binding proteins (PstB), two transmembrane proteins (PstC and PstA) and a solute-binding protein (PstS).

The protein localises to the cell inner membrane. It carries out the reaction phosphate(out) + ATP + H2O = ADP + 2 phosphate(in) + H(+). Functionally, part of the ABC transporter complex PstSACB involved in phosphate import. Responsible for energy coupling to the transport system. In Synechococcus sp. (strain ATCC 27144 / PCC 6301 / SAUG 1402/1) (Anacystis nidulans), this protein is Phosphate import ATP-binding protein PstB.